Consider the following 63-residue polypeptide: Alpha-conotoxin-like Am1.6 (63 aa).

The first 21 residues, 1-21, serve as a signal peptide directing secretion; that stretch reads MGMRMMFTVFLLVVLATTVVS. Positions 22–46 are excised as a propeptide; the sequence is FTSYRASDGRNAAAKASDLIALTVR. A ser-Xaa-Pro motif, crucial for potent interaction with nAChR region spans residues 50–52; that stretch reads SRP.

It belongs to the conotoxin A superfamily. Post-translationally, is not hydroxylated. In terms of processing, contains 2 disulfide bonds. In terms of tissue distribution, expressed by the venom duct.

It localises to the secreted. Functionally, alpha-conotoxins act on postsynaptic membranes, they bind to the nicotinic acetylcholine receptors (nAChR) and thus inhibit them. In Conus amadis (Amadis cone), this protein is Alpha-conotoxin-like Am1.6.